We begin with the raw amino-acid sequence, 476 residues long: MNILFAVSECVPFVKSGGLADVAGALPKELKKLGVEVRIILPNYSLIPQKLRDGCTLHKVINVPLGWRNQYCGILKGEQDGITYYLIDNEYYFKRDSLYGHYDDGERFSYFSKAVLECIPHLDFEVDVLHSHDWHTAMVNFLLREKYQDNPLYEHIKTVYTIHNLQFQGVFPPEVMYDLLELGDEYFHSEQLEFYGNVNFMKGGIIASDQITAVSPTYKEEIQYEFFGEKLDGLLRKYNDKLSGIVNGIDTSVYNPETDSYITAQYDADSLYEKNENKRALQRYFGLPEKEDTPIISMVTRLTKQKGLDLVRTVFREIMEEDVQCIILGSGDSEYEQFFEWMAYEYPEKVKVYIGFNEELAHQVYAGSDLFLMPSLFEPCGLGQLIALAYGTIPIVRETGGLNDTVQSYDEETGEGNGFSFTNFNAHDMLHTVLRAIEFYHDKSVWEQLVKQAMTEDYSWEKSALAYKKLYKSLME.

Residue Lys-15 participates in ADP-alpha-D-glucose binding.

It belongs to the glycosyltransferase 1 family. Bacterial/plant glycogen synthase subfamily.

It catalyses the reaction [(1-&gt;4)-alpha-D-glucosyl](n) + ADP-alpha-D-glucose = [(1-&gt;4)-alpha-D-glucosyl](n+1) + ADP + H(+). The protein operates within glycan biosynthesis; glycogen biosynthesis. Synthesizes alpha-1,4-glucan chains using ADP-glucose. The protein is Glycogen synthase of Bacillus anthracis.